A 278-amino-acid chain; its full sequence is TnpB-like protein MJ0751 (278 aa).

Positions 222, 225, 239, and 242 each coordinate Zn(2+).

This sequence in the N-terminal section; belongs to the transposase 2 family. In the C-terminal section; belongs to the transposase 35 family.

This chain is TnpB-like protein MJ0751, found in Methanocaldococcus jannaschii (strain ATCC 43067 / DSM 2661 / JAL-1 / JCM 10045 / NBRC 100440) (Methanococcus jannaschii).